The chain runs to 523 residues: Acetyl-coenzyme A carboxylase carboxyl transferase subunit beta, chloroplastic (523 aa).

The CoA carboxyltransferase N-terminal domain occupies 224–523; the sequence is FWVICENCHK…FVPSNQNSIK (300 aa). 4 residues coordinate Zn(2+): C228, C231, C247, and C250. Residues 228-250 form a C4-type zinc finger; it reads CENCHKFNYKRLFKSKMNICEEC.

It belongs to the AccD/PCCB family. In terms of assembly, acetyl-CoA carboxylase is a heterohexamer composed of biotin carboxyl carrier protein, biotin carboxylase and 2 subunits each of ACCase subunit alpha and ACCase plastid-coded subunit beta (accD). Requires Zn(2+) as cofactor.

It localises to the plastid. The protein resides in the chloroplast stroma. The enzyme catalyses N(6)-carboxybiotinyl-L-lysyl-[protein] + acetyl-CoA = N(6)-biotinyl-L-lysyl-[protein] + malonyl-CoA. It participates in lipid metabolism; malonyl-CoA biosynthesis; malonyl-CoA from acetyl-CoA: step 1/1. Its function is as follows. Component of the acetyl coenzyme A carboxylase (ACC) complex. Biotin carboxylase (BC) catalyzes the carboxylation of biotin on its carrier protein (BCCP) and then the CO(2) group is transferred by the transcarboxylase to acetyl-CoA to form malonyl-CoA. The sequence is that of Acetyl-coenzyme A carboxylase carboxyl transferase subunit beta, chloroplastic from Cucumis sativus (Cucumber).